A 329-amino-acid chain; its full sequence is Carrier protein YMC2, mitochondrial (329 aa).

The tract at residues 1–27 (MSEEFPTPQLLDELEDQQKVTTPNEKR) is disordered. A mitochondrion-targeting transit peptide spans 1-33 (MSEEFPTPQLLDELEDQQKVTTPNEKRELSSNR). Solcar repeat units follow at residues 34–115 (VLKD…MKRF), 143–226 (SQYY…LVAR), and 238–325 (PPWK…VMRF). Transmembrane regions (helical) follow at residues 38–58 (IFAG…FDTT), 84–104 (VFAF…CVSV), 140–160 (LPLS…SFLA), 205–225 (TMIR…ALVA), 243–263 (CLFG…LDVV), and 297–318 (FFKG…TFLT).

It belongs to the mitochondrial carrier (TC 2.A.29) family.

It localises to the mitochondrion inner membrane. In Saccharomyces cerevisiae (strain ATCC 204508 / S288c) (Baker's yeast), this protein is Carrier protein YMC2, mitochondrial (YMC2).